Consider the following 515-residue polypeptide: 2-isopropylmalate synthase (515 aa).

Residues 5–267 (VIIFDTTLRD…DTRINTQEIH (263 aa)) enclose the Pyruvate carboxyltransferase domain. Aspartate 14, histidine 202, histidine 204, and asparagine 238 together coordinate Mn(2+). A regulatory domain region spans residues 392–515 (VLDKLSAHST…VADIKNHKHH (124 aa)).

It belongs to the alpha-IPM synthase/homocitrate synthase family. LeuA type 1 subfamily. Homodimer. Mn(2+) serves as cofactor.

The protein resides in the cytoplasm. It catalyses the reaction 3-methyl-2-oxobutanoate + acetyl-CoA + H2O = (2S)-2-isopropylmalate + CoA + H(+). It functions in the pathway amino-acid biosynthesis; L-leucine biosynthesis; L-leucine from 3-methyl-2-oxobutanoate: step 1/4. Its function is as follows. Catalyzes the condensation of the acetyl group of acetyl-CoA with 3-methyl-2-oxobutanoate (2-ketoisovalerate) to form 3-carboxy-3-hydroxy-4-methylpentanoate (2-isopropylmalate). This is 2-isopropylmalate synthase from Haemophilus influenzae (strain PittEE).